The following is a 452-amino-acid chain: 1,3-beta-glucanosyltransferase gel1 (452 aa).

The signal sequence occupies residues 1 to 19; it reads MKASAVTAALAVGASTVLA. Cysteine 71 and cysteine 100 are joined by a disulfide. The (1,3-beta-D-glucosyl)n site is built by tyrosine 89, asparagine 159, glutamate 160, aspartate 201, and arginine 206. Glutamate 160 acts as the Proton donor in catalysis. Intrachain disulfides connect cysteine 215/cysteine 345 and cysteine 233/cysteine 264. Asparagine 249 carries an N-linked (GlcNAc...) asparagine glycan. Glutamate 261 acts as the Nucleophile in catalysis. Tyrosine 292 lines the (1,3-beta-D-glucosyl)n pocket. Polar residues predominate over residues 325-340; the sequence is EKTSNPSGDGNYNKTG. The segment at 325–419 is disordered; that stretch reads EKTSNPSGDG…SGTSTSSKGA (95 aa). N-linked (GlcNAc...) asparagine glycosylation is present at asparagine 337. A compositionally biased stretch (low complexity) spans 393–419; sequence STATAEPGSGSATGSSSSGTSTSSKGA. The GPI-like-anchor amidated alanine moiety is linked to residue alanine 419. Residues 420–452 constitute a propeptide, removed in mature form; it reads AAGLTVPSLTMAPVVVGAVTLLSTVFGAGLVLL.

Belongs to the glycosyl hydrolase 72 family. In terms of processing, the GPI-like anchor contains a phosphoceramide lipid group. The anchor position has not been determined.

The protein localises to the cell membrane. Functionally, splits internally a 1,3-beta-glucan molecule and transfers the newly generated reducing end (the donor) to the non-reducing end of another 1,3-beta-glucan molecule (the acceptor) forming a 1,3-beta linkage, resulting in the elongation of 1,3-beta-glucan chains in the cell wall. Involved in cell wall morphogenesis. The polypeptide is 1,3-beta-glucanosyltransferase gel1 (gel1) (Aspergillus fumigatus (strain CBS 144.89 / FGSC A1163 / CEA10) (Neosartorya fumigata)).